A 325-amino-acid polypeptide reads, in one-letter code: Ribonucleoside-diphosphate reductase small chain (325 aa).

Fe cation is bound by residues D74, E105, and H108. Residue Y112 is part of the active site. 3 residues coordinate Fe cation: E168, E202, and H205.

This sequence belongs to the ribonucleoside diphosphate reductase small chain family. Heterodimer of a large and a small chain. The cofactor is Fe cation.

It catalyses the reaction a 2'-deoxyribonucleoside 5'-diphosphate + [thioredoxin]-disulfide + H2O = a ribonucleoside 5'-diphosphate + [thioredoxin]-dithiol. Functionally, ribonucleoside-diphosphate reductase holoenzyme provides the precursors necessary for viral DNA synthesis. Allows virus growth in non-dividing cells. Catalyzes the biosynthesis of deoxyribonucleotides from the corresponding ribonucleotides. This Yaba-like disease virus (YLDV) protein is Ribonucleoside-diphosphate reductase small chain.